The sequence spans 458 residues: Adenylosuccinate synthetase (458 aa).

GTP-binding positions include 17–23 and 45–47; these read GDEGKGK and GHT. Aspartate 18 acts as the Proton acceptor in catalysis. Residues aspartate 18 and glycine 45 each contribute to the Mg(2+) site. IMP contacts are provided by residues 18–21, 43–46, threonine 137, arginine 151, glutamine 247, threonine 262, and arginine 330; these read DEGK and NAGH. Residue histidine 46 is the Proton donor of the active site. A substrate-binding site is contributed by 326–332; that stretch reads VTTGRSR. GTP contacts are provided by residues arginine 332, 358–360, and 440–442; these read KLD and STS.

Belongs to the adenylosuccinate synthetase family. In terms of assembly, homodimer. Mg(2+) serves as cofactor.

Its subcellular location is the cytoplasm. It catalyses the reaction IMP + L-aspartate + GTP = N(6)-(1,2-dicarboxyethyl)-AMP + GDP + phosphate + 2 H(+). It functions in the pathway purine metabolism; AMP biosynthesis via de novo pathway; AMP from IMP: step 1/2. Functionally, plays an important role in the de novo pathway of purine nucleotide biosynthesis. Catalyzes the first committed step in the biosynthesis of AMP from IMP. This is Adenylosuccinate synthetase from Verminephrobacter eiseniae (strain EF01-2).